Here is a 99-residue protein sequence, read N- to C-terminus: Defensin-A4 (99 aa).

The N-terminal stretch at 1–21 (MKTLCLLFAVLCLVTWTQARG) is a signal peptide. A propeptide spanning residues 22 to 68 (AEVEENLTAQDGEVDIAGDNGDVQLTLNTDDFESFTLKTLTLGHPRV) is cleaved from the precursor. Cystine bridges form between Cys-73/Cys-97, Cys-75/Cys-89, and Cys-79/Cys-96.

Belongs to the alpha-defensin family. Lowly expressed in spleen, and expressed at lower levels in kidney and lung.

It is found in the secreted. Functionally, has antimicrobial activity. This chain is Defensin-A4, found in Ornithorhynchus anatinus (Duckbill platypus).